The chain runs to 375 residues: Putative glycyl-radical enzyme activating enzyme MJ0021 (375 aa).

The Radical SAM core domain occupies 23–246 (QCVKGGKLVL…LKVIKEFKGD (224 aa)). Positions 38, 42, and 45 each coordinate [4Fe-4S] cluster. S-adenosyl-L-methionine-binding positions include 44–46 (YCP) and glycine 87.

It belongs to the organic radical-activating enzymes family. Requires [4Fe-4S] cluster as cofactor.

The catalysed reaction is glycyl-[protein] + reduced [flavodoxin] + S-adenosyl-L-methionine = glycin-2-yl radical-[protein] + semiquinone [flavodoxin] + 5'-deoxyadenosine + L-methionine + H(+). This Methanocaldococcus jannaschii (strain ATCC 43067 / DSM 2661 / JAL-1 / JCM 10045 / NBRC 100440) (Methanococcus jannaschii) protein is Putative glycyl-radical enzyme activating enzyme MJ0021.